We begin with the raw amino-acid sequence, 390 residues long: Ureide permease 1 (390 aa).

Residues 1–9 (MYMIESKGG) are Extracellular-facing. Residues 10 to 30 (AIACMLLALLFLGTWPAIMTL) traverse the membrane as a helical segment. The Cytoplasmic portion of the chain corresponds to 31–44 (TERRGRLPQHTYLD). A helical membrane pass occupies residues 45–65 (YTLTNLLAAVIIALTLGEIGP). Residues 66–78 (SRPNFFTQLSQDN) lie on the Extracellular side of the membrane. Residues 79–99 (WQSVMFAMAGGIVLSLGNLAT) traverse the membrane as a helical segment. The Cytoplasmic segment spans residues 100–101 (QY). The helical transmembrane segment at 102-122 (AWAYVGLSVTEVITASITVVI) threads the bilayer. At 123–136 (GTTLNYFLDDRINR) the chain is on the extracellular side. The chain crosses the membrane as a helical span at residues 137–157 (AEVLFPGVACFLIAVCFGSAV). The Cytoplasmic portion of the chain corresponds to 158-221 (HKSNAADNKT…RAIKVFGKST (64 aa)). Residue 213 to 220 (AIKVFGKS) participates in ATP binding. A helical membrane pass occupies residues 222–242 (IIGLVITFFAGICFSLFSPAF). Residues 243-261 (NLATNDQWHTLKHGVPKLN) are Extracellular-facing. A helical transmembrane segment spans residues 262-282 (VYTAFFYFSISAFVVALILNI). Topologically, residues 283–307 (RFLYWPILGLPRSSFKAYLNDWNGR) are cytoplasmic. The helical transmembrane segment at 308 to 328 (GWSFLAGFLCGFGNGLQFMGG) threads the bilayer. Over 329–333 (QAAGY) the chain is Extracellular. The helical transmembrane segment at 334–354 (AAADAVQALPLVSTFWGILLF) threads the bilayer. The Cytoplasmic portion of the chain corresponds to 355–363 (GEYRRSSRK). The chain crosses the membrane as a helical span at residues 364-384 (TYTLLISMLLMFIVAVAVLMA). Over 385–390 (SSGHRK) the chain is Extracellular.

It belongs to the plant ureide permease (TC 2.A.7.19) family. As to expression, expressed in leaves, flowers, roots and stems.

Its subcellular location is the membrane. Proton-coupled transporter that transports a wide spectrum of oxo derivatives of heterocyclic nitrogen compounds, including allantoin, uric acid and xanthine, but not adenine. Mediates high affinity transport of uracil and 5-fluorouracil (a toxic uracil analog). Mediates transport of free pyrimidines and may function during early seedling development in salvage pathways, by the utilization of pyrimidines from seed storage tissue. In Arabidopsis thaliana (Mouse-ear cress), this protein is Ureide permease 1.